The chain runs to 290 residues: Glycine--tRNA ligase alpha subunit (290 aa).

Belongs to the class-II aminoacyl-tRNA synthetase family. Tetramer of two alpha and two beta subunits.

The protein resides in the cytoplasm. It catalyses the reaction tRNA(Gly) + glycine + ATP = glycyl-tRNA(Gly) + AMP + diphosphate. The chain is Glycine--tRNA ligase alpha subunit from Prochlorococcus marinus (strain NATL2A).